The sequence spans 1098 residues: Bifunctional helicase and thymine dioxygenase JBP2 (1098 aa).

The interval 1 to 540 is thymine dioxygenase; the sequence is MLNGLTRVST…PPLFVPTRLA (540 aa). His-415, Asp-417, and His-465 together coordinate Fe cation. Arg-479 contacts 2-oxoglutarate. The DNA Helicase stretch occupies residues 541–1098; that stretch reads SHLAPVQLAA…RYQESVRESE (558 aa). Positions 555-730 constitute a Helicase ATP-binding domain; the sequence is VERTEKQSGC…YRLVGWVNKG (176 aa). 568 to 575 contacts ATP; the sequence is MTMGLGKT. Residues 681-684 carry the DEAH box motif; the sequence is DEGH. The 161-residue stretch at 897-1057 folds into the Helicase C-terminal domain; sequence VLVDIVLRVQ…ALPDELEDCA (161 aa).

In the C-terminal section; belongs to the SNF2/RAD54 helicase family. It in the N-terminal section; belongs to the TET family. JBP2 subfamily. Requires Fe(2+) as cofactor.

Its subcellular location is the nucleus. It carries out the reaction ATP + H2O = ADP + phosphate + H(+). The enzyme catalyses thymine + 2-oxoglutarate + O2 = 5-hydroxymethyluracil + succinate + CO2. Dioxygenase that catalyzes the first step of DNA base J (beta-d-glucosyl-HOMedU) biosynthesis by converting thymine to 5-hydroxymethyluracil (HOMedU). DNA base J is a hypermodified thymidine residue found in the genome of kinetoplastid parasites, which is localized primarily to repetitive DNA, namely the telomeres, and is implicated in the regulation of antigenic variation. Probably also acts as a DNA helicase. Recognizes and binds specific regions of the genome, hydrolyzes ATP and allows the DNA base J de novo synthesis. Involved in initial synthesis of DNA base J, JBP1 being able to act via the basal level of DNA base J and propagate further synthesis. In contrast to JBP1, it does not specifically bind DNA base J, however it binds chromatin. The sequence is that of Bifunctional helicase and thymine dioxygenase JBP2 (JBP2) from Leishmania infantum.